The primary structure comprises 107 residues: L-rhamnose mutarotase (107 aa).

Y21 serves as a coordination point for substrate. H25 (proton donor) is an active-site residue. Residues Y44 and 79-80 (WW) each bind substrate.

It belongs to the rhamnose mutarotase family. As to quaternary structure, homodimer.

The protein localises to the cytoplasm. The catalysed reaction is alpha-L-rhamnose = beta-L-rhamnose. The protein operates within carbohydrate metabolism; L-rhamnose metabolism. In terms of biological role, involved in the anomeric conversion of L-rhamnose. In Agrobacterium fabrum (strain C58 / ATCC 33970) (Agrobacterium tumefaciens (strain C58)), this protein is L-rhamnose mutarotase.